Reading from the N-terminus, the 259-residue chain is Virulence plasmid ParA family protein pGP5-D (259 aa).

Residue 9–16 coordinates ATP; that stretch reads FKGGTGKT.

It belongs to the ParA family.

The chain is Virulence plasmid ParA family protein pGP5-D from Chlamydia psittaci (Chlamydophila psittaci).